We begin with the raw amino-acid sequence, 237 residues long: Pyridoxine 5'-phosphate synthase (237 aa).

3-amino-2-oxopropyl phosphate is bound by residues asparagine 7 and arginine 18. The active-site Proton acceptor is histidine 43. Positions 45 and 50 each coordinate 1-deoxy-D-xylulose 5-phosphate. Glutamate 70 (proton acceptor) is an active-site residue. Threonine 100 lines the 1-deoxy-D-xylulose 5-phosphate pocket. Histidine 190 acts as the Proton donor in catalysis. 3-amino-2-oxopropyl phosphate contacts are provided by residues aspartate 191 and 213–214; that span reads GH.

Belongs to the PNP synthase family. In terms of assembly, homooctamer; tetramer of dimers.

Its subcellular location is the cytoplasm. The enzyme catalyses 3-amino-2-oxopropyl phosphate + 1-deoxy-D-xylulose 5-phosphate = pyridoxine 5'-phosphate + phosphate + 2 H2O + H(+). The protein operates within cofactor biosynthesis; pyridoxine 5'-phosphate biosynthesis; pyridoxine 5'-phosphate from D-erythrose 4-phosphate: step 5/5. Functionally, catalyzes the complicated ring closure reaction between the two acyclic compounds 1-deoxy-D-xylulose-5-phosphate (DXP) and 3-amino-2-oxopropyl phosphate (1-amino-acetone-3-phosphate or AAP) to form pyridoxine 5'-phosphate (PNP) and inorganic phosphate. This is Pyridoxine 5'-phosphate synthase from Bacteroides thetaiotaomicron (strain ATCC 29148 / DSM 2079 / JCM 5827 / CCUG 10774 / NCTC 10582 / VPI-5482 / E50).